Here is a 376-residue protein sequence, read N- to C-terminus: UPF0284 protein glr4139 (376 aa).

This sequence belongs to the UPF0284 family.

This chain is UPF0284 protein glr4139, found in Gloeobacter violaceus (strain ATCC 29082 / PCC 7421).